The primary structure comprises 268 residues: Thiazole synthase (268 aa).

The active-site Schiff-base intermediate with DXP is lysine 108. 1-deoxy-D-xylulose 5-phosphate-binding positions include glycine 169, 195–196 (AG), and 217–218 (NS). The disordered stretch occupies residues 248 to 268 (RLKENPLASPSSPLDGVISNN). Residues 255–268 (ASPSSPLDGVISNN) show a composition bias toward polar residues.

This sequence belongs to the ThiG family. In terms of assembly, homotetramer. Forms heterodimers with either ThiH or ThiS.

The protein resides in the cytoplasm. It carries out the reaction [ThiS sulfur-carrier protein]-C-terminal-Gly-aminoethanethioate + 2-iminoacetate + 1-deoxy-D-xylulose 5-phosphate = [ThiS sulfur-carrier protein]-C-terminal Gly-Gly + 2-[(2R,5Z)-2-carboxy-4-methylthiazol-5(2H)-ylidene]ethyl phosphate + 2 H2O + H(+). It participates in cofactor biosynthesis; thiamine diphosphate biosynthesis. In terms of biological role, catalyzes the rearrangement of 1-deoxy-D-xylulose 5-phosphate (DXP) to produce the thiazole phosphate moiety of thiamine. Sulfur is provided by the thiocarboxylate moiety of the carrier protein ThiS. In vitro, sulfur can be provided by H(2)S. This Prochlorococcus marinus (strain NATL2A) protein is Thiazole synthase.